A 1705-amino-acid polypeptide reads, in one-letter code: Intersectin-1 (1705 aa).

EH domains are found at residues 21 to 109 (ERAK…PVAM) and 220 to 309 (SRLK…SFRR). 2 EF-hand domains span residues 53-88 (LPQPVLAQIWALADMNNDGRMDQLEFSIAMKLIKLK) and 253-288 (LPQSQLATIWNLSDIDQDGKLTAEEFILAMHLIDVA). The Ca(2+) site is built by D66, N68, D70, R72, E77, D266, D268, D270, K272, and E277. 3 disordered regions span residues 322–355 (VSVDQRLPEEPEEEEPQNADKKLPVTFEDKKREN), 386–433 (RAEQ…ERRE), and 668–708 (RYKF…PPEP). Residues 325-697 (DQRLPEEPEE…VEKKPEIQEK (373 aa)) are KLERQ. Residues 339–355 (NADKKLPVTFEDKKREN) show a composition bias toward basic and acidic residues. Residues 350 to 687 (DKKRENFERG…KREESIQKCE (338 aa)) are a coiled coil. Positions 668–699 (RYKFQDEEKEKREESIQKCEVEKKPEIQEKPN) are enriched in basic and acidic residues. Residues 732–793 (VKVVYYRALY…PANYAERMPE (62 aa)) enclose the SH3 1 domain. Low complexity predominate over residues 823–833 (AFTNTSTNSNN). The tract at residues 823–851 (AFTNTSTNSNNWADFSSTWPTNNTDKVES) is disordered. Positions 834–846 (WADFSSTWPTNNT) are enriched in polar residues. The region spanning 897 to 955 (VEGLQAQALYPWRAKKDNHLNFNKNDVITVLEQQDMWWFGEVQGQKGWFPKSYVKLISG) is the SH3 2 domain. Positions 959–978 (KSTSIDSTSSESPASLKRVS) are disordered. The segment covering 960-973 (STSIDSTSSESPAS) has biased composition (low complexity). SH3 domains lie at 986–1044 (IQGE…PKDS), 1058–1122 (KKPE…LLSP), and 1139–1198 (PPTC…LTTD). Residues 1088 to 1111 (RKKNPGGWWEGELQARGKKRQIGW) carry the Bipartite nuclear localization signal; in isoform 2 motif. One can recognise a DH domain in the interval 1221–1407 (KRQGYIHELI…EELCSQVNEG (187 aa)). The 110-residue stretch at 1446 to 1555 (KFLHSGKLYK…WVQKIKAASE (110 aa)) folds into the PH domain. Residues 1563 to 1679 (KKREKAYLVR…KKDQGSKGPV (117 aa)) enclose the C2 domain. D1651, S1654, and D1657 together coordinate Ca(2+).

In terms of assembly, binds epn1 and epn2. It depends on Ca(2+) as a cofactor.

The protein resides in the endomembrane system. It localises to the synapse. Its subcellular location is the synaptosome. It is found in the cell projection. The protein localises to the lamellipodium. The protein resides in the cell membrane. It localises to the membrane. Its subcellular location is the clathrin-coated pit. It is found in the recycling endosome. The protein localises to the cytoplasm. The protein resides in the nucleus envelope. Functionally, adapter protein that provides a link between the endocytic membrane traffic and the actin assembly machinery. Acts as a guanine nucleotide exchange factor (GEF) for cdc42, and thereby stimulates actin nucleation mediated by wasl and the arp2/3 complex. Involved in endocytosis of activated egfr, and probably also other growth factor receptors. The sequence is that of Intersectin-1 (itsn1) from Xenopus laevis (African clawed frog).